Consider the following 277-residue polypeptide: Ribosomally synthesized cyclic peptide asperipin-2a precursor aprA (277 aa).

A signal peptide spans 1-19; it reads MHLSRYIAVLLSASSFVSA. 12 consecutive propeptides follow at residues 20–69, 76–88, 95–107, 114–126, 133–145, 152–164, 171–183, 190–202, 209–221, 228–240, 247–259, and 266–277; these read LPLQ…LDKR, KRNA…LDKR, and KRNAETPEDLDK.

AprA is processed by kexin proteases to produce 11 identical copies of the hexapeptide Phe-Tyr-Tyr-Thr-Gly-Tyr, that is further modified aprY and aprR to yield asperipin-2a. The bicyclic structure of asperipin-2a is likely synthesized by the single ustYa family oxidase aprY. The reductase aprR may be required for the final reduction to yield asperipin-2a.

The protein operates within secondary metabolite biosynthesis. Its function is as follows. Ribosomally synthesized cyclic peptide asperipin-2a precursor; part of the gene cluster that mediates the biosynthesis of the asperipin-2a, a bicyclic peptide that possesses two macrocyclic ether rings consisting of 14- and 17-membered paracyclophans. The aprA translated product contains a 11-fold repeated peptide embedding the hexapeptide Phe-Tyr-Tyr-Thr-Gly-Tyr, that is converted into asperipin-2a. After being excised from the precursor peptide by kexin proteases, the core peptides are cyclized and modified post-translationally by enzymes encoded within the corresponding gene cluster. The chain is Ribosomally synthesized cyclic peptide asperipin-2a precursor aprA from Aspergillus flavus (strain ATCC 200026 / FGSC A1120 / IAM 13836 / NRRL 3357 / JCM 12722 / SRRC 167).